A 556-amino-acid polypeptide reads, in one-letter code: 2-succinyl-5-enolpyruvyl-6-hydroxy-3-cyclohexene-1-carboxylate synthase (556 aa).

Belongs to the TPP enzyme family. MenD subfamily. Homodimer. Mg(2+) is required as a cofactor. It depends on Mn(2+) as a cofactor. The cofactor is thiamine diphosphate.

It catalyses the reaction isochorismate + 2-oxoglutarate + H(+) = 5-enolpyruvoyl-6-hydroxy-2-succinyl-cyclohex-3-ene-1-carboxylate + CO2. The protein operates within quinol/quinone metabolism; 1,4-dihydroxy-2-naphthoate biosynthesis; 1,4-dihydroxy-2-naphthoate from chorismate: step 2/7. It functions in the pathway quinol/quinone metabolism; menaquinone biosynthesis. In terms of biological role, catalyzes the thiamine diphosphate-dependent decarboxylation of 2-oxoglutarate and the subsequent addition of the resulting succinic semialdehyde-thiamine pyrophosphate anion to isochorismate to yield 2-succinyl-5-enolpyruvyl-6-hydroxy-3-cyclohexene-1-carboxylate (SEPHCHC). In Staphylococcus epidermidis (strain ATCC 35984 / DSM 28319 / BCRC 17069 / CCUG 31568 / BM 3577 / RP62A), this protein is 2-succinyl-5-enolpyruvyl-6-hydroxy-3-cyclohexene-1-carboxylate synthase.